The sequence spans 64 residues: Large ribosomal subunit protein bL28C (64 aa).

Belongs to the bacterial ribosomal protein bL28 family.

This chain is Large ribosomal subunit protein bL28C, found in Mycobacterium tuberculosis (strain ATCC 25618 / H37Rv).